We begin with the raw amino-acid sequence, 201 residues long: Thioredoxin reductase-like selenoprotein T (201 aa).

A signal peptide spans 1-26 (MARSSGPLCLLLLGGLVAGILSGASA). The segment at residues 51-54 (CVSU) is a cross-link (cysteinyl-selenocysteine (Cys-Sec)). Residue Sec54 is a non-standard amino acid, selenocysteine. Residues 96-116 (VFKLVLIGLIIAGKDPFAFFG) form a helical membrane-spanning segment.

The protein belongs to the SelWTH family. Selenoprotein T subfamily. In terms of processing, may contain a selenide-sulfide bond between Cys-51 and Sec-54. This bond is speculated to serve as redox-active pair.

The protein localises to the endoplasmic reticulum membrane. The enzyme catalyses [thioredoxin]-dithiol + NADP(+) = [thioredoxin]-disulfide + NADPH + H(+). Its function is as follows. Selenoprotein with thioredoxin reductase-like oxidoreductase activity. This chain is Thioredoxin reductase-like selenoprotein T (selenot), found in Xenopus tropicalis (Western clawed frog).